The primary structure comprises 204 residues: Facilitator of iron transport 3 (204 aa).

The first 18 residues, 1–18 (MKFSSALVLSAVAATALA), serve as a signal peptide directing secretion. Disordered stretches follow at residues 84–104 (SAAE…SGSS) and 133–175 (EGSS…SSTA). Low complexity predominate over residues 135–175 (SSNTWSPSSTSTSSEAATSSASTTATTTAETSSSATSSSTA). Residue Gly182 is the site of GPI-anchor amidated glycine attachment. Positions 183-204 (AADAITAGTGLMGAALAAVMLL) are cleaved as a propeptide — removed in mature form.

The GPI-anchor is attached to the protein in the endoplasmic reticulum and serves to target the protein to the cell surface. There, the glucosamine-inositol phospholipid moiety is cleaved off and the GPI-modified mannoprotein is covalently attached via its lipidless GPI glycan remnant to the 1,6-beta-glucan of the outer cell wall layer.

Its subcellular location is the secreted. The protein localises to the cell wall. The protein resides in the membrane. In terms of biological role, involved in the uptake of non-siderophore and siderophore sources of iron. Has a role in the retention of iron in the cell wall and periplasmic space. This chain is Facilitator of iron transport 3 (FIT3), found in Saccharomyces cerevisiae (strain ATCC 204508 / S288c) (Baker's yeast).